We begin with the raw amino-acid sequence, 747 residues long: Pseudouridine-metabolizing bifunctional protein C1861.05 (747 aa).

The interval 1–379 (MLIVMNRGCR…KVSDKGVSSS (379 aa)) is pseudouridine-5'-phosphate glycosidase. Glu-61 acts as the Proton donor; for PsiMP glycosidase activity in catalysis. Substrate-binding residues include Lys-123 and Val-143. A Mn(2+)-binding site is contributed by Asp-175. 177 to 179 (SAD) serves as a coordination point for substrate. Lys-196 functions as the Nucleophile; for PsiMP glycosidase activity in the catalytic mechanism. Residues 380 to 747 (KKKITETTSK…VNPEIKTLLK (368 aa)) are pseudouridine kinase.

This sequence in the N-terminal section; belongs to the pseudouridine-5'-phosphate glycosidase family. It in the C-terminal section; belongs to the carbohydrate kinase PfkB family. Requires Mn(2+) as cofactor.

Its subcellular location is the cytoplasm. The catalysed reaction is D-ribose 5-phosphate + uracil = psi-UMP + H2O. It catalyses the reaction pseudouridine + ATP = psi-UMP + ADP + H(+). Functionally, bifunctional enzyme that catalyzes the phosphorylation of pseudouridine to pseudouridine 5'-phosphate (PsiMP), and the reversible cleavage of pseudouridine 5'-phosphate to ribose 5-phosphate and uracil. Is involved in a pseudouridine degradation pathway. In Schizosaccharomyces pombe (strain 972 / ATCC 24843) (Fission yeast), this protein is Pseudouridine-metabolizing bifunctional protein C1861.05.